The primary structure comprises 391 residues: Phosphoprotein (391 aa).

Residues T10, T16, and T39 each carry the phosphothreonine modification. Residues 55 to 65 (KNIQYPTTSHQ) are compositionally biased toward polar residues. The interval 55-90 (KNIQYPTTSHQGSKSKGRGSGARPIIVSSSEGGTGG) is disordered. The residue at position 69 (S69) is a Phosphoserine. Phosphothreonine occurs at positions 91, 150, and 165. Residues 145–208 (TSTPVTEFKR…PQQDSTPANV (64 aa)) are disordered. S188 bears the Phosphoserine mark. The multimerization stretch occupies residues 216-279 (ISANEIMDLL…MATVKIMDPG (64 aa)). Residues 218–245 (ANEIMDLLRGMDARLQHLEQKVDKVLAQ) are a coiled coil. At T250 the chain carries Phosphothreonine. The residue at position 257 (S257) is a Phosphoserine. Residues T258 and T282 each carry the phosphothreonine modification. Phosphoserine occurs at positions 292 and 294. T298 carries the phosphothreonine modification. Phosphoserine is present on residues S301 and S374. Residues 343–391 (AGRKVMITKMITDCVANPQMKQVFEQRLAKASTEDALNDIKRDIIRSAI) form an interaction with the nucleoprotein region. Phosphothreonine is present on T375.

It belongs to the rubulavirus/avulavirus P protein family. As to quaternary structure, homotetramer. Interacts (via multimerization domain) with polymerase L; this interaction forms the polymerase L-P complex. Interacts (via N-terminus) with N0 (via Ncore); this interaction allows P to chaperon N0 to avoid N polymerization before encapsidation. Interacts (via C-terminus) with N-RNA template; this interaction positions the polymerase on the template for both transcription and replication. Interacts with host RPS6KB1 kinase; this interaction may play a role in the viral replication and transcription.

In terms of biological role, essential cofactor of the RNA polymerase L that plays a central role in the transcription and replication by forming the polymerase complex with RNA polymerase L and recruiting L to the genomic N-RNA template for RNA synthesis. Also plays a central role in the encapsidation of nascent RNA chains by forming the encapsidation complex with the nucleocapsid protein N (N-P complex). Acts as a chaperone for newly synthesized free N protein, so-called N0, allowing encapsidation of nascent RNA chains during replication. The nucleoprotein protein N prevents excessive phosphorylation of P, which leads to down-regulation of viral transcription/ replication. Participates, together with N, in the formation of viral factories (viroplasms), which are large inclusions in the host cytoplasm where replication takes place. The polypeptide is Phosphoprotein (Mumps virus genotype B (strain Miyahara vaccine) (MuV)).